Reading from the N-terminus, the 291-residue chain is 2-C-methyl-D-erythritol 4-phosphate cytidylyltransferase (291 aa).

The segment at 1–23 (MTERDFDTPVETPTVQPAPAQGA) is disordered.

This sequence belongs to the IspD/TarI cytidylyltransferase family. IspD subfamily.

The catalysed reaction is 2-C-methyl-D-erythritol 4-phosphate + CTP + H(+) = 4-CDP-2-C-methyl-D-erythritol + diphosphate. It functions in the pathway isoprenoid biosynthesis; isopentenyl diphosphate biosynthesis via DXP pathway; isopentenyl diphosphate from 1-deoxy-D-xylulose 5-phosphate: step 2/6. In terms of biological role, catalyzes the formation of 4-diphosphocytidyl-2-C-methyl-D-erythritol from CTP and 2-C-methyl-D-erythritol 4-phosphate (MEP). This is 2-C-methyl-D-erythritol 4-phosphate cytidylyltransferase from Bifidobacterium longum (strain NCC 2705).